A 419-amino-acid polypeptide reads, in one-letter code: Metacaspase-1A (419 aa).

A disordered region spans residues 1-89 (MHHQQSSYGG…PPDQPVSFGQ (89 aa)). Residues 41–51 (NGYNSPQQNYG) are compositionally biased toward polar residues. Low complexity predominate over residues 59–71 (YQQQSAYQNSYNQ). Catalysis depends on residues His190 and Cys246.

This sequence belongs to the peptidase C14B family.

Its function is as follows. Involved in cell death (apoptosis). The polypeptide is Metacaspase-1A (casA) (Aspergillus oryzae (strain ATCC 42149 / RIB 40) (Yellow koji mold)).